The primary structure comprises 181 residues: Ferritin BfrB (181 aa).

The region spanning Met15–Gly150 is the Ferritin-like diiron domain. Fe cation is bound by residues Glu22, Glu55, His58, Glu99, and Gln132.

Belongs to the ferritin family. Prokaryotic subfamily. In terms of assembly, homooligomer of 24 subunits that are packed together to form an approximately spherical molecule with a central cavity, in which large amounts of iron can be stored.

It carries out the reaction 4 Fe(2+) + O2 + 4 H(+) = 4 Fe(3+) + 2 H2O. Iron-storage protein that displays ferroxidase activity, catalyzing the oxidation of Fe(2+) ions into Fe(3+) ions, that can then be deposited as a ferric-oxide mineral core within the central cavity of the protein complex. This chain is Ferritin BfrB (bfrB), found in Mycobacterium tuberculosis (strain ATCC 35801 / TMC 107 / Erdman).